The sequence spans 925 residues: Probable disease resistance protein At1g61310 (925 aa).

Positions 25-69 form a coiled coil; the sequence is GKSYIRTLEKNLRALQREMEDLRATQHEVQNKVAREESRHQQRLE. The interval 134-154 is disordered; it reads NFDEVSQPPPRSEVEERPTQP. The region spanning 139 to 442 is the NB-ARC domain; the sequence is SQPPPRSEVE…CEGFIGEDQV (304 aa). Position 181-188 (181-188) interacts with ATP; that stretch reads GMGGVGKT. LRR repeat units follow at residues 525-546, 547-568, 571-594, 595-617, 618-640, and 641-663; these read AVRR…SKCS, ELTT…FIRY, KLVV…SGLV, SLQY…KELK, KLTF…SRLL, and SLRV…KELQ.

It belongs to the disease resistance NB-LRR family.

Functionally, probable disease resistance protein. The chain is Probable disease resistance protein At1g61310 from Arabidopsis thaliana (Mouse-ear cress).